The chain runs to 377 residues: Carboxynorspermidine/carboxyspermidine decarboxylase (377 aa).

Position 41 is an N6-(pyridoxal phosphate)lysine (Lys41). Substrate-binding residues include Glu238 and Asp274.

Belongs to the Orn/Lys/Arg decarboxylase class-II family. NspC subfamily. As to quaternary structure, homodimer. The cofactor is pyridoxal 5'-phosphate.

Its subcellular location is the cytoplasm. It catalyses the reaction carboxynorspermidine + H(+) = norspermidine + CO2. The catalysed reaction is carboxyspermidine + H(+) = spermidine + CO2. Catalyzes the decarboxylation of carboxynorspermidine and carboxyspermidine. Carboxynorspermidine is decarboxylated 20-fold more efficiently than carboxyspermidine. Exhibits some activity with L-ornithine, but shows no activity with L-arginine, L-lysine or meso-diaminopimelate. The protein is Carboxynorspermidine/carboxyspermidine decarboxylase of Vibrio vulnificus (strain CMCP6).